Here is a 322-residue protein sequence, read N- to C-terminus: Acetyl-coenzyme A carboxylase carboxyl transferase subunit alpha (322 aa).

A CoA carboxyltransferase C-terminal domain is found at 40-297 (PLQKKLGDLR…RETLTRNLEE (258 aa)).

It belongs to the AccA family. In terms of assembly, acetyl-CoA carboxylase is a heterohexamer composed of biotin carboxyl carrier protein (AccB), biotin carboxylase (AccC) and two subunits each of ACCase subunit alpha (AccA) and ACCase subunit beta (AccD).

Its subcellular location is the cytoplasm. The enzyme catalyses N(6)-carboxybiotinyl-L-lysyl-[protein] + acetyl-CoA = N(6)-biotinyl-L-lysyl-[protein] + malonyl-CoA. It participates in lipid metabolism; malonyl-CoA biosynthesis; malonyl-CoA from acetyl-CoA: step 1/1. Component of the acetyl coenzyme A carboxylase (ACC) complex. First, biotin carboxylase catalyzes the carboxylation of biotin on its carrier protein (BCCP) and then the CO(2) group is transferred by the carboxyltransferase to acetyl-CoA to form malonyl-CoA. This is Acetyl-coenzyme A carboxylase carboxyl transferase subunit alpha from Gemmatimonas aurantiaca (strain DSM 14586 / JCM 11422 / NBRC 100505 / T-27).